Consider the following 211-residue polypeptide: MGQKSNPIGLRLKIINTWDSLWYANKDYTTKLHEDFLLRKFIKKAFYHASISKVVIARKVDVIMVNVYSAKPGVIIGKKGADIDKVKQKIVKMINNNIELNIIEVKKPELKAILIAENIAQQLERRVSFRRAMKRSVQNCLKIGAKGIKVSCAGRLGGAEIARTEWYKEGSVPLHTFRANIDYGFSEAKTIYGIIGVKVWVYLGETKSSNE.

A KH type-2 domain is found at 38–106; the sequence is LRKFIKKAFY…NIELNIIEVK (69 aa).

This sequence belongs to the universal ribosomal protein uS3 family. As to quaternary structure, part of the 30S ribosomal subunit. Forms a tight complex with proteins S10 and S14.

Binds the lower part of the 30S subunit head. Binds mRNA in the 70S ribosome, positioning it for translation. The polypeptide is Small ribosomal subunit protein uS3 (Ehrlichia ruminantium (strain Welgevonden)).